The following is an 883-amino-acid chain: Phosphoenolpyruvate carboxylase (883 aa).

Residues His138 and Lys546 contribute to the active site.

Belongs to the PEPCase type 1 family. As to quaternary structure, homotetramer. Mg(2+) serves as cofactor.

It carries out the reaction oxaloacetate + phosphate = phosphoenolpyruvate + hydrogencarbonate. The enzyme has distinct binding sites for each of the allosteric effectors such as acetyl-CoA, fructose 1,6-bisphosphate, guanosine 3'-diphosphate 5'-diphosphate, long chain fatty acids, and L-aspartate. Forms oxaloacetate, a four-carbon dicarboxylic acid source for the tricarboxylic acid cycle. The chain is Phosphoenolpyruvate carboxylase from Escherichia coli O157:H7.